Here is a 206-residue protein sequence, read N- to C-terminus: Large ribosomal subunit protein uL22m (206 aa).

The N-terminal 40 residues, 1-40 (MAAAVLGQLGALWIHNLRSRGRLAWGVLPQSYVHTSASLD), are a transit peptide targeting the mitochondrion.

It belongs to the universal ribosomal protein uL22 family. Component of the mitochondrial ribosome large subunit (39S) which comprises a 16S rRNA and about 50 distinct proteins.

The protein resides in the mitochondrion. This is Large ribosomal subunit protein uL22m (MRPL22) from Pongo abelii (Sumatran orangutan).